The following is a 512-amino-acid chain: Histidine ammonia-lyase (512 aa).

A cross-link (5-imidazolinone (Ala-Gly)) is located at residues 142-144 (ASG). Ser143 carries the 2,3-didehydroalanine (Ser) modification.

Belongs to the PAL/histidase family. Contains an active site 4-methylidene-imidazol-5-one (MIO), which is formed autocatalytically by cyclization and dehydration of residues Ala-Ser-Gly.

Its subcellular location is the cytoplasm. The catalysed reaction is L-histidine = trans-urocanate + NH4(+). Its pathway is amino-acid degradation; L-histidine degradation into L-glutamate; N-formimidoyl-L-glutamate from L-histidine: step 1/3. This is Histidine ammonia-lyase from Bartonella tribocorum (strain CIP 105476 / IBS 506).